Consider the following 98-residue polypeptide: uncharacterized protein (98 aa).

The protein belongs to the Rv1128c/1148c/1588c/1702c/1945/3466 family.

This is an uncharacterized protein from Mycobacterium tuberculosis (strain ATCC 25618 / H37Rv).